Here is a 373-residue protein sequence, read N- to C-terminus: Carnosine N-methyltransferase (373 aa).

S-adenosyl-L-methionine-binding residues include Gln110, Arg113, Gly154, Glu175, Asp242, Phe243, and Cys262. Asp266 provides a ligand contact to carnosine. Tyr274 is an S-adenosyl-L-methionine binding site. Carnosine is bound by residues His297 and Tyr356.

Belongs to the carnosine N-methyltransferase family.

Its subcellular location is the cytoplasm. It localises to the nucleus. It carries out the reaction carnosine + S-adenosyl-L-methionine = anserine + S-adenosyl-L-homocysteine + H(+). In terms of biological role, N-methyltransferase that mediates the formation of anserine (beta-alanyl-N(Pi)-methyl-L-histidine) from carnosine. Also methylates other L-histidine-containing di- and tripeptides such as Gly-Gly-His, Gly-His and homocarnosine (GABA-His). The chain is Carnosine N-methyltransferase from Schizosaccharomyces pombe (strain 972 / ATCC 24843) (Fission yeast).